The sequence spans 349 residues: 5-deoxyribose 1-phosphate isomerase (349 aa).

Residues 49–51 (RGA), arginine 92, and glutamine 199 each bind substrate. The Proton donor role is filled by aspartate 240. 250–251 (NK) is a binding site for substrate.

The protein belongs to the EIF-2B alpha/beta/delta subunits family. DrdI subfamily.

The catalysed reaction is 5-deoxy-alpha-D-ribose 1-phosphate = 5-deoxy-D-ribulose 1-phosphate. The protein operates within carbohydrate degradation. Its function is as follows. Catalyzes the isomerization of 5-deoxy-alpha-D-ribose 1-phosphate to 5-deoxy-D-ribulose 1-phosphate, as part of a 5-deoxyribose salvage pathway that recycles this toxic radical SAM enzyme by-product to mainstream metabolites. The protein is 5-deoxyribose 1-phosphate isomerase of Clostridium botulinum (strain Okra / Type B1).